Reading from the N-terminus, the 415-residue chain is F-box protein ETP1 (415 aa).

Positions 1 to 46 constitute an F-box domain; it reads MTIPDLCNDLVDEILCRVPARNLKRLRSTSKRWNRLFKDDRRFARE.

Interacts with EIN2 (via C-terminus).

Functionally, negative regulator of EIN2 protein stability. This chain is F-box protein ETP1, found in Arabidopsis thaliana (Mouse-ear cress).